Here is a 240-residue protein sequence, read N- to C-terminus: Endo-chitosanase B (240 aa).

A signal peptide spans 1-17; it reads MRLSEILAVALVTGATA. The N-linked (GlcNAc...) asparagine glycan is linked to asparagine 86.

Belongs to the glycosyl hydrolase 75 family.

The protein localises to the secreted. The catalysed reaction is Endohydrolysis of beta-(1-&gt;4)-linkages between D-glucosamine residues in a partly acetylated chitosan.. Chitosanase catalyzing the endo-type cleavage of chitosan, the deacylated form of chitin. Chitosanase may be crucial in the degradation of the deacetylated portion of chitin in the fungal cell wall. Chitoolisaccharides produced by the hydrolysis of partially N-acetylated chitosan are known to have many biological activities, including antibacterial activity, immune-enhancing effects, and elicitor activity. In Aspergillus oryzae (Yellow koji mold), this protein is Endo-chitosanase B (csnB).